The chain runs to 440 residues: Adenylosuccinate synthetase (440 aa).

Residues 14–20 and 42–44 each bind GTP; these read GDEGKGK and GHT. The active-site Proton acceptor is D15. Mg(2+) contacts are provided by D15 and G42. IMP contacts are provided by residues 15–18, 40–43, T131, R145, Q226, T241, and R313; these read DEGK and NAGH. Catalysis depends on H43, which acts as the Proton donor. 309 to 315 serves as a coordination point for substrate; that stretch reads ATTGRQR. GTP contacts are provided by residues R315, 341–343, and 423–425; these read KLD and STG.

The protein belongs to the adenylosuccinate synthetase family. Homodimer. Mg(2+) is required as a cofactor.

It is found in the cytoplasm. The catalysed reaction is IMP + L-aspartate + GTP = N(6)-(1,2-dicarboxyethyl)-AMP + GDP + phosphate + 2 H(+). Its pathway is purine metabolism; AMP biosynthesis via de novo pathway; AMP from IMP: step 1/2. Functionally, plays an important role in the de novo pathway of purine nucleotide biosynthesis. Catalyzes the first committed step in the biosynthesis of AMP from IMP. In Hydrogenovibrio crunogenus (strain DSM 25203 / XCL-2) (Thiomicrospira crunogena), this protein is Adenylosuccinate synthetase.